The following is a 427-amino-acid chain: 4-hydroxy-3-methylbut-2-en-1-yl diphosphate synthase (flavodoxin) (427 aa).

Residues cysteine 300, cysteine 303, cysteine 346, and glutamate 353 each coordinate [4Fe-4S] cluster.

It belongs to the IspG family. [4Fe-4S] cluster serves as cofactor.

The enzyme catalyses (2E)-4-hydroxy-3-methylbut-2-enyl diphosphate + oxidized [flavodoxin] + H2O + 2 H(+) = 2-C-methyl-D-erythritol 2,4-cyclic diphosphate + reduced [flavodoxin]. It participates in isoprenoid biosynthesis; isopentenyl diphosphate biosynthesis via DXP pathway; isopentenyl diphosphate from 1-deoxy-D-xylulose 5-phosphate: step 5/6. Converts 2C-methyl-D-erythritol 2,4-cyclodiphosphate (ME-2,4cPP) into 1-hydroxy-2-methyl-2-(E)-butenyl 4-diphosphate. The protein is 4-hydroxy-3-methylbut-2-en-1-yl diphosphate synthase (flavodoxin) of Chromobacterium violaceum (strain ATCC 12472 / DSM 30191 / JCM 1249 / CCUG 213 / NBRC 12614 / NCIMB 9131 / NCTC 9757 / MK).